Here is a 488-residue protein sequence, read N- to C-terminus: Glutamyl-tRNA(Gln) amidotransferase subunit A (488 aa).

Active-site charge relay system residues include Lys-77 and Ser-152. Ser-176 serves as the catalytic Acyl-ester intermediate.

This sequence belongs to the amidase family. GatA subfamily. As to quaternary structure, heterotrimer of A, B and C subunits.

It carries out the reaction L-glutamyl-tRNA(Gln) + L-glutamine + ATP + H2O = L-glutaminyl-tRNA(Gln) + L-glutamate + ADP + phosphate + H(+). Functionally, allows the formation of correctly charged Gln-tRNA(Gln) through the transamidation of misacylated Glu-tRNA(Gln) in organisms which lack glutaminyl-tRNA synthetase. The reaction takes place in the presence of glutamine and ATP through an activated gamma-phospho-Glu-tRNA(Gln). In Streptococcus pyogenes serotype M18 (strain MGAS8232), this protein is Glutamyl-tRNA(Gln) amidotransferase subunit A.